A 367-amino-acid chain; its full sequence is 3-dehydroquinate synthase (367 aa).

Residues 112-116, 136-137, Lys149, Lys158, and 176-179 contribute to the NAD(+) site; these read GVIGD, TT, and TLKT. Zn(2+)-binding residues include Glu191, His256, and His273.

Belongs to the sugar phosphate cyclases superfamily. Dehydroquinate synthase family. It depends on NAD(+) as a cofactor. Co(2+) is required as a cofactor. Zn(2+) serves as cofactor.

The protein resides in the cytoplasm. The enzyme catalyses 7-phospho-2-dehydro-3-deoxy-D-arabino-heptonate = 3-dehydroquinate + phosphate. It functions in the pathway metabolic intermediate biosynthesis; chorismate biosynthesis; chorismate from D-erythrose 4-phosphate and phosphoenolpyruvate: step 2/7. Functionally, catalyzes the conversion of 3-deoxy-D-arabino-heptulosonate 7-phosphate (DAHP) to dehydroquinate (DHQ). This Prochlorococcus marinus (strain SARG / CCMP1375 / SS120) protein is 3-dehydroquinate synthase.